A 1175-amino-acid polypeptide reads, in one-letter code: MVNIAGPPPREVLEGPILAVSRQTKANIPGAPERKSFAKITEPIEVPGLLDIQLNSFAWLIGTPEWRARQQEELGDSVRVTSGLEDILEELSPIQDYSGNMSLSLSEPRFEDMKNTIDECKDKDINYSAPLYVTAEFINNETQEIKSQTVFIGDFPMMTDKGTFIVNGTERVVVSQLVRSPGVYFDQTIDKSTERPLHSVKVIPSRGAWLEFDVDKRDTVGVRIDRKRRQPVTVLLKALGWTTEQITERFGFSEIMMSTLESDGVSNTDEALLEIYRKQRPGEQPTRDLAQSLLDNSFFRAKRYDLAKVGRYKVNRKLGLGGDNEGLMTLTEEDIATTLEYLVRLHAGETTMTSPTGEVIPVETDDIDHFGNRRLRTVGELIQNQVRVGLSRMERVVRERMTTQDAESITPTSLINVRPVSAAIREFFGTSQLSQFMDQNNSLSGLTHKRRLSALGPGGLSRERAGIEVRDVHASHYGRMCPIETPEGPNIGLIGSLASYARVNAFGFIETPYRKVENGVLTDQIDYLTADEEDRFVVAQANVEHDADGKITADSVTVRVKNGDIQVVAPESVDYLDVSPRQMVSVATAMIPFLEHDDANRALMGANMQRQAVPLVRSEAPFVGTGMERAAAYDAGDLIINKKGGVVENVSADIITVMADDGTRETYILRKFERTNQGTCYNQTPLVNIGDRVEAGQVLADGPGTHNGEMSLGRNLLVAFMPWEGHNYEDAIILNQRVVEEDILTSIHIEEHEIDARDTKLGPEEITREIPNVSEDVLKDLDERGIVRIGADVRDGDILVGKVTPKGETELTPEERLLRAIFGEKAREVRDTSMKVPHGETGKVIGVRRFSRDDDDDLAPGVNEMIRVYVAQKRKIQDGDKLAGRHGNKGVVGKILPQEDMPFMPDGTPVDIILNTHGVPRRMNIGQVLEVHLGWLAAAGWKIDTEDPANAELLKTLPEDLYDVPAGSLTATPVFDGATNEEIAGLLGNSRPNRDGDVMVDENGKATLFDGRSGEPFPYPVSVGYMYILKLHHLVDEKIHARSTGPYSMITQQPLGGKAQFGGQRFGEMEVWAMQAYGAAYTLQELLTIKSDDVVGRVKVYEAIVKGENIPDPGIPESFKVLLKELQSLCLNVEVLSADGTPMELSGSDDDEFDQAGASLGINLSRDERSDADIA.

Residues 1142-1175 form a disordered region; the sequence is PMELSGSDDDEFDQAGASLGINLSRDERSDADIA. The span at 1165–1175 shows a compositional bias: basic and acidic residues; sequence SRDERSDADIA.

The protein belongs to the RNA polymerase beta chain family. In terms of assembly, the RNAP catalytic core consists of 2 alpha, 1 beta, 1 beta' and 1 omega subunit. When a sigma factor is associated with the core the holoenzyme is formed, which can initiate transcription.

It catalyses the reaction RNA(n) + a ribonucleoside 5'-triphosphate = RNA(n+1) + diphosphate. In terms of biological role, DNA-dependent RNA polymerase catalyzes the transcription of DNA into RNA using the four ribonucleoside triphosphates as substrates. The chain is DNA-directed RNA polymerase subunit beta from Corynebacterium diphtheriae (strain ATCC 700971 / NCTC 13129 / Biotype gravis).